Here is a 500-residue protein sequence, read N- to C-terminus: Glycerol kinase (500 aa).

Thr13 serves as a coordination point for ADP. Thr13, Thr14, and Ser15 together coordinate ATP. Thr13 is a binding site for sn-glycerol 3-phosphate. Arg17 provides a ligand contact to ADP. Residues Arg83, Glu84, Tyr135, and Asp244 each contribute to the sn-glycerol 3-phosphate site. Arg83, Glu84, Tyr135, Asp244, and Gln245 together coordinate glycerol. ADP is bound by residues Thr266 and Gly309. Residues Thr266, Gly309, Gln313, and Gly410 each contribute to the ATP site. The ADP site is built by Gly410 and Asn414.

The protein belongs to the FGGY kinase family.

It carries out the reaction glycerol + ATP = sn-glycerol 3-phosphate + ADP + H(+). It functions in the pathway polyol metabolism; glycerol degradation via glycerol kinase pathway; sn-glycerol 3-phosphate from glycerol: step 1/1. With respect to regulation, inhibited by fructose 1,6-bisphosphate (FBP). Functionally, key enzyme in the regulation of glycerol uptake and metabolism. Catalyzes the phosphorylation of glycerol to yield sn-glycerol 3-phosphate. The sequence is that of Glycerol kinase from Burkholderia cenocepacia (strain HI2424).